A 392-amino-acid chain; its full sequence is Probable protein phosphatase 2C 22 (392 aa).

A disordered region spans residues 1 to 26 (MEETRGISDPENGSSSYGGKPPNPLS). Residues 89 to 356 (RSGAWSDIGS…DNVTAVVVCL (268 aa)) form the PPM-type phosphatase domain. Residues aspartate 133, glycine 134, aspartate 304, and aspartate 347 each contribute to the Mn(2+) site.

Belongs to the PP2C family. Mg(2+) is required as a cofactor. Requires Mn(2+) as cofactor.

It catalyses the reaction O-phospho-L-seryl-[protein] + H2O = L-seryl-[protein] + phosphate. The catalysed reaction is O-phospho-L-threonyl-[protein] + H2O = L-threonyl-[protein] + phosphate. This is Probable protein phosphatase 2C 22 from Arabidopsis thaliana (Mouse-ear cress).